A 422-amino-acid chain; its full sequence is Phosphoglycerate kinase (422 aa).

Residues 24-26, 64-67, arginine 129, and arginine 171 contribute to the substrate site; these read DLN and HLGR. ATP-binding positions include lysine 222, glycine 309, glutamate 340, and 370-373; that span reads DIDT.

Belongs to the phosphoglycerate kinase family. Monomer.

The protein resides in the cytoplasm. It catalyses the reaction (2R)-3-phosphoglycerate + ATP = (2R)-3-phospho-glyceroyl phosphate + ADP. The protein operates within carbohydrate degradation; glycolysis; pyruvate from D-glyceraldehyde 3-phosphate: step 2/5. This Ureaplasma parvum serovar 3 (strain ATCC 700970) protein is Phosphoglycerate kinase (pgk).